The sequence spans 2049 residues: Nonribosomal peptide synthetase tcpP (2049 aa).

An adenylation 1 region spans residues 13–395 (RHHAEAHPEA…LGRKDQLIKN (383 aa)). The Carrier 1 domain maps to 497–573 (ATADTKLSAL…EISNHIIEFD (77 aa)). Ser-534 bears the O-(pantetheine 4'-phosphoryl)serine mark. Residues 605–913 (REITMTDVQR…ALGSKMDLLS (309 aa)) are condensation 1. Residues 1071-1452 (VAAWPMSVAL…GRADHQVKVR (382 aa)) are adenylation 2. Positions 1550–1625 (DHTELVVSQV…SLAASVKKHL (76 aa)) constitute a Carrier 2 domain. The residue at position 1585 (Ser-1585) is an O-(pantetheine 4'-phosphoryl)serine. The segment at 1662 to 2044 (MHKQASNPSS…FEQEICNLLD (383 aa)) is condensation 2.

This sequence belongs to the NRP synthetase family.

Its pathway is secondary metabolite biosynthesis. Nonribosomal peptide synthetase; part of the gene cluster that mediates the biosynthesis of an unusual class of epipolythiodioxopiperazines (ETPs) lacking the reactive thiol group important for toxicity. Firstly, L-tyrosine is prenylated by tcpD, before undergoing condensation with L-glycine in a reaction catalyzed by the NRPS tcpP leading to the diketopiperazine (DKP) backbone. Afterwards the alpha-carbon of tyrosine is oxidized by the cytochrome P450 tcpC to form a hydroxyl group. However, in contrast other ETP biosynthesis pathways studied so far, tcpC is not able to bishydroxylate the DKP at both alpha-carbon positions, but hydroxylates the alpha-carbon of the tyrosine part and the nitrogen of the glycine part. The next steps involve an alpha,beta-elimination reaction catalyzed by tcpI, a methylation by the methyltransferase tcpN the action of the four enzyme cascade tcpG/K/J/I. Due to a dysfunctional cytochrome P450 monooxygenase tcpC, the pathway leads to the biosynthesis of probable non-toxic metabolites lacking the reactive thiol group. This chain is Nonribosomal peptide synthetase tcpP, found in Claviceps purpurea (strain 20.1) (Ergot fungus).